A 148-amino-acid polypeptide reads, in one-letter code: Putative pre-16S rRNA nuclease (148 aa).

The protein belongs to the YqgF nuclease family.

The protein localises to the cytoplasm. In terms of biological role, could be a nuclease involved in processing of the 5'-end of pre-16S rRNA. In Chlamydia trachomatis serovar A (strain ATCC VR-571B / DSM 19440 / HAR-13), this protein is Putative pre-16S rRNA nuclease.